Here is an 87-residue protein sequence, read N- to C-terminus: Probable Fe(2+)-trafficking protein (87 aa).

The protein belongs to the Fe(2+)-trafficking protein family.

Functionally, could be a mediator in iron transactions between iron acquisition and iron-requiring processes, such as synthesis and/or repair of Fe-S clusters in biosynthetic enzymes. The polypeptide is Probable Fe(2+)-trafficking protein (Francisella tularensis subsp. holarctica (strain FTNF002-00 / FTA)).